A 1129-amino-acid polypeptide reads, in one-letter code: Serine/threonine-protein kinase LATS1 (1129 aa).

Residues 1-11 (MKRGEKPEGYR) are compositionally biased toward basic and acidic residues. Positions 1–71 (MKRGEKPEGY…PRQVRNPPKF (71 aa)) are disordered. The segment covering 19 to 30 (PASNYPGSSRQM) has biased composition (polar residues). Residues 46–64 (DASKAEHNLNKMSTEDPRQ) show a composition bias toward basic and acidic residues. The UBA domain occupies 100-141 (EVNPQMFQDLQAAGFDEDMVIQALQKTNNRSIEAAVEFISKM). Disordered regions lie at residues 148 to 216 (REQM…RPLS) and 228 to 276 (PSNG…QTKR). Positions 235–268 (NPPPPPQVRSVTPPPPPRGQTPPPRGTTPPPPSW) are enriched in pro residues. Thr-246 bears the Phosphothreonine mark. Residue Ser-278 is modified to Phosphoserine. 4 disordered regions span residues 292-317 (PPGA…SQAQ), 363-407 (PTGS…VPQS), 432-492 (WPQS…TPAP), and 513-630 (PTHP…ESRI). The segment covering 300–312 (YPPPPLTTSPMNP) has biased composition (pro residues). Residues 372–375 (PPPY) carry the PPxY motif 1 motif. Polar residues predominate over residues 380–392 (ANGQSPSALQTGA). The segment covering 433-445 (PQSSSAPAQSSPS) has biased composition (low complexity). The span at 453-481 (WQPNIPVRSNSFNNPLGSRASHSANSQPS) shows a compositional bias: polar residues. Phosphoserine; by NUAK1 and NUAK2 is present on Ser-463. Low complexity-rich tracts occupy residues 482–492 (ATTVTAITPAP) and 520–530 (PQPVQTVQPTP). The tract at residues 525–654 (TVQPTPFSEG…HVENVLKSHQ (130 aa)) is interaction with YAP1. The PPxY motif 2 motif lies at 555–558 (PPPY). Basic and acidic residues predominate over residues 578 to 608 (PCKDEQPSLPKEDDSEKSADSGDSGDKEKKQ). The residue at position 612 (Ser-612) is a Phosphoserine. Residues 620–629 (KKDEERRESR) are compositionally biased toward basic and acidic residues. Position 673 is a phosphoserine (Ser-673). Residues 704–1009 (FVKIKTLGIG…ADEIKAHPFF (306 aa)) form the Protein kinase domain. ATP contacts are provided by residues 710–718 (LGIGAFGEV) and Lys-733. The active-site Proton acceptor is Asp-827. A Phosphoserine; by STK3/MST2 modification is found at Ser-908. One can recognise an AGC-kinase C-terminal domain in the interval 1010–1089 (KTIDFSSDLR…RRFFDDNGYP (80 aa)). Thr-1078 carries the post-translational modification Phosphothreonine; by STK3/MST2. A disordered region spans residues 1104–1129 (QGSEQQSDEDDQHTSSDGNNRDLVYV).

This sequence belongs to the protein kinase superfamily. AGC Ser/Thr protein kinase family. In terms of assembly, complexes with CDK1 in early mitosis. LATS1-associated CDK1 has no mitotic cyclin partner and no apparent kinase activity. Binds phosphorylated ZYX, locating this protein to the mitotic spindle and suggesting a role for actin regulatory proteins during mitosis. Binds to and colocalizes with LIMK1 at the actomyosin contractile ring during cytokinesis. Interacts (via PPxY motif 2) with YAP1 (via WW domains). Interacts with MOB1A and MOB1B. Interacts with LIMD1, WTIP and AJUBA. Interacts with ESR1, DCAF1 and DCAF13; probably recruits DCAF1 and DCAF13 to ESR1 to promote ESR1 ubiquitination and ubiquitin-mediated proteasomal degradation. Interacts with STK3/MST2; this interaction is inhibited in the presence of DLG5. Interacts with SCRIB in the presence of DLG5. Interacts with WWTR1/TAZ. Interacts with WWC1, WWC2 and WWC3 (via their WW domains). Mg(2+) is required as a cofactor. In terms of processing, autophosphorylated and phosphorylated during M-phase of the cell cycle. Phosphorylated by STK3/MST2 at Ser-908 and Thr-1078, which results in its activation. Phosphorylated by MAP4Ks; in parallel to STK3/MST2 and resulting to its activation. Phosphorylation at Ser-463 by NUAK1 and NUAK2 leads to decreased protein level and is required to regulate cellular senescence and cellular ploidy.

The protein resides in the cytoplasm. It localises to the cytoskeleton. Its subcellular location is the microtubule organizing center. It is found in the centrosome. The protein localises to the spindle. The protein resides in the midbody. It localises to the spindle pole body. It catalyses the reaction L-seryl-[protein] + ATP = O-phospho-L-seryl-[protein] + ADP + H(+). The enzyme catalyses L-threonyl-[protein] + ATP = O-phospho-L-threonyl-[protein] + ADP + H(+). Negative regulator of YAP1 in the Hippo signaling pathway that plays a pivotal role in organ size control and tumor suppression by restricting proliferation and promoting apoptosis. The core of this pathway is composed of a kinase cascade wherein STK3/MST2 and STK4/MST1, in complex with its regulatory protein SAV1, phosphorylates and activates LATS1/2 in complex with its regulatory protein MOB1, which in turn phosphorylates and inactivates YAP1 oncoprotein and WWTR1/TAZ. Phosphorylation of YAP1 by LATS1 inhibits its translocation into the nucleus to regulate cellular genes important for cell proliferation, cell death, and cell migration. Acts as a tumor suppressor which plays a critical role in maintenance of ploidy through its actions in both mitotic progression and the G1 tetraploidy checkpoint. Negatively regulates G2/M transition by down-regulating CDK1 kinase activity. Involved in the control of p53 expression. Affects cytokinesis by regulating actin polymerization through negative modulation of LIMK1. May also play a role in endocrine function. Plays a role in mammary gland epithelial cell differentiation, both through the Hippo signaling pathway and the intracellular estrogen receptor signaling pathway by promoting the degradation of ESR1. Acts as an activator of the NLRP3 inflammasome by mediating phosphorylation of 'Ser-265' of NLRP3 following NLRP3 palmitoylation, promoting NLRP3 activation by NEK7. The sequence is that of Serine/threonine-protein kinase LATS1 from Mus musculus (Mouse).